Reading from the N-terminus, the 413-residue chain is Branched-chain-amino-acid aminotransferase 3, chloroplastic (413 aa).

The N-terminal 60 residues, 1 to 60 (MERAAILPSVNQNYLLCPSRAFSTRLHSSTRNLSPPSFASIKLQHSSSSVSSNGGISLTR), are a transit peptide targeting the chloroplast. N6-(pyridoxal phosphate)lysine is present on K259.

This sequence belongs to the class-IV pyridoxal-phosphate-dependent aminotransferase family. It depends on pyridoxal 5'-phosphate as a cofactor. Expressed in the phloem cells.

The protein resides in the plastid. It is found in the chloroplast. It catalyses the reaction L-leucine + 2-oxoglutarate = 4-methyl-2-oxopentanoate + L-glutamate. The catalysed reaction is L-isoleucine + 2-oxoglutarate = (S)-3-methyl-2-oxopentanoate + L-glutamate. The enzyme catalyses L-valine + 2-oxoglutarate = 3-methyl-2-oxobutanoate + L-glutamate. It carries out the reaction a 2-oxocarboxylate + L-methionine = 4-methylsulfanyl-2-oxobutanoate + an L-alpha-amino acid. The protein operates within amino-acid biosynthesis; L-isoleucine biosynthesis; L-isoleucine from 2-oxobutanoate: step 4/4. It functions in the pathway amino-acid biosynthesis; L-leucine biosynthesis; L-leucine from 3-methyl-2-oxobutanoate: step 4/4. Its pathway is amino-acid biosynthesis; L-valine biosynthesis; L-valine from pyruvate: step 4/4. Its activity is regulated as follows. Inhibited by Ser- or Thr-derived imine. Its function is as follows. Converts 2-oxo acids to branched-chain amino acids. Acts on leucine, isoleucine and valine. Also involved in methionine chain elongation cycle of aliphatic glucosinolate formation. Catalyzes the conversion of 5-methylthiopentyl-2-oxo and 6-methylthiohexyl-2-oxo acids to their respective Met derivatives, homomethionine and dihomo-methionine, respectively. This chain is Branched-chain-amino-acid aminotransferase 3, chloroplastic, found in Arabidopsis thaliana (Mouse-ear cress).